Consider the following 634-residue polypeptide: Chaperone protein dnaK2 (634 aa).

Residue T197 is modified to Phosphothreonine; by autocatalysis. Positions 601–620 (SAEASANAQAGPSSSSSSSS) are enriched in low complexity. Residues 601–634 (SAEASANAQAGPSSSSSSSSGDDDVIDAEFSESK) form a disordered region. Positions 621-634 (GDDDVIDAEFSESK) are enriched in acidic residues.

The protein belongs to the heat shock protein 70 family.

Acts as a chaperone. The polypeptide is Chaperone protein dnaK2 (dnaK2) (Synechococcus elongatus (strain ATCC 33912 / PCC 7942 / FACHB-805) (Anacystis nidulans R2)).